Reading from the N-terminus, the 201-residue chain is Recombination protein RecR (201 aa).

The segment at 59 to 74 (CEICGNMDTENICRIC) adopts a C4-type zinc-finger fold. Residues 82–177 (SIIAIVETVA…KISRLASGIP (96 aa)) form the Toprim domain.

It belongs to the RecR family.

Its function is as follows. May play a role in DNA repair. It seems to be involved in an RecBC-independent recombinational process of DNA repair. It may act with RecF and RecO. The polypeptide is Recombination protein RecR (Rickettsia rickettsii (strain Iowa)).